The primary structure comprises 186 residues: Shikimate kinase (186 aa).

ATP is bound at residue 21-26 (GVGKTT). Residue Thr-25 participates in Mg(2+) binding. Asp-43, Arg-67, and Gly-90 together coordinate substrate. Position 129 (Arg-129) interacts with ATP. Substrate is bound at residue Arg-147.

It belongs to the shikimate kinase family. As to quaternary structure, monomer. Mg(2+) serves as cofactor.

The protein localises to the cytoplasm. It carries out the reaction shikimate + ATP = 3-phosphoshikimate + ADP + H(+). It functions in the pathway metabolic intermediate biosynthesis; chorismate biosynthesis; chorismate from D-erythrose 4-phosphate and phosphoenolpyruvate: step 5/7. Functionally, catalyzes the specific phosphorylation of the 3-hydroxyl group of shikimic acid using ATP as a cosubstrate. The protein is Shikimate kinase of Bacillus subtilis (strain 168).